The chain runs to 294 residues: Phosphatidylserine decarboxylase proenzyme (294 aa).

Residues Asp-113, His-169, and Ser-256 each act as charge relay system; for autoendoproteolytic cleavage activity in the active site. The Schiff-base intermediate with substrate; via pyruvic acid; for decarboxylase activity role is filled by Ser-256. Residue Ser-256 is modified to Pyruvic acid (Ser); by autocatalysis.

This sequence belongs to the phosphatidylserine decarboxylase family. PSD-B subfamily. Prokaryotic type II sub-subfamily. As to quaternary structure, heterodimer of a large membrane-associated beta subunit and a small pyruvoyl-containing alpha subunit. Pyruvate is required as a cofactor. Post-translationally, is synthesized initially as an inactive proenzyme. Formation of the active enzyme involves a self-maturation process in which the active site pyruvoyl group is generated from an internal serine residue via an autocatalytic post-translational modification. Two non-identical subunits are generated from the proenzyme in this reaction, and the pyruvate is formed at the N-terminus of the alpha chain, which is derived from the carboxyl end of the proenzyme. The autoendoproteolytic cleavage occurs by a canonical serine protease mechanism, in which the side chain hydroxyl group of the serine supplies its oxygen atom to form the C-terminus of the beta chain, while the remainder of the serine residue undergoes an oxidative deamination to produce ammonia and the pyruvoyl prosthetic group on the alpha chain. During this reaction, the Ser that is part of the protease active site of the proenzyme becomes the pyruvoyl prosthetic group, which constitutes an essential element of the active site of the mature decarboxylase.

The protein localises to the cell membrane. It catalyses the reaction a 1,2-diacyl-sn-glycero-3-phospho-L-serine + H(+) = a 1,2-diacyl-sn-glycero-3-phosphoethanolamine + CO2. The protein operates within phospholipid metabolism; phosphatidylethanolamine biosynthesis; phosphatidylethanolamine from CDP-diacylglycerol: step 2/2. Catalyzes the formation of phosphatidylethanolamine (PtdEtn) from phosphatidylserine (PtdSer). This Clostridium perfringens (strain ATCC 13124 / DSM 756 / JCM 1290 / NCIMB 6125 / NCTC 8237 / Type A) protein is Phosphatidylserine decarboxylase proenzyme.